The following is a 157-amino-acid chain: uncharacterized protein (157 aa).

The 138-residue stretch at 9 to 146 (LLINYKTLDE…GDFYVWHPET (138 aa)) folds into the N-acetyltransferase domain.

This is an uncharacterized protein from Bacillus anthracis (strain CDC 684 / NRRL 3495).